A 244-amino-acid polypeptide reads, in one-letter code: MSFSPVSPSQFPSVTKLQVDSVTFDPSVKSPASSNPLFLGGAGVRGLDIQGKFVIFTVIGVYLESNAVPSLSVKWKGKTTEELSESVPFFREIVTGAFEKFIKVTMKLPLTGQQYSEKVTENCVAIWKSLGIYTDCEAKAVEKFLEIFKEETFPPGSSILFALSPTGSLTVAFSRDDSIPETGIAVIENKLLAEAVLESIIGKNGVSPGTRLSIAERLAKLMTKNKVEEDASNHSIDEKLAKEN.

Positions 57, 122, and 199 each coordinate substrate.

Belongs to the chalcone isomerase family.

The enzyme catalyses a chalcone = a flavanone.. The protein operates within secondary metabolite biosynthesis; flavonoid biosynthesis. Functionally, catalyzes the intramolecular cyclization of bicyclic chalcones into tricyclic (S)-flavanones. Responsible for the isomerization of 4,2',4',6'-tetrahydroxychalcone (also termed chalcone) into naringenin. This is Chalcone--flavanone isomerase (CHI) from Arabidopsis lyrata subsp. petraea (Northern rock-cress).